Here is a 403-residue protein sequence, read N- to C-terminus: Enoyl-[acyl-carrier-protein] reductase [NADH] (403 aa).

NAD(+)-binding positions include 49–54 (GASSGY), 75–76 (FE), 112–113 (DA), and 141–142 (LA). Tyrosine 227 contributes to the substrate binding site. The active-site Proton donor is tyrosine 237. Residues lysine 246 and 276 to 278 (VVT) each bind NAD(+).

Belongs to the TER reductase family. As to quaternary structure, monomer.

It catalyses the reaction a 2,3-saturated acyl-[ACP] + NAD(+) = a (2E)-enoyl-[ACP] + NADH + H(+). It participates in lipid metabolism; fatty acid biosynthesis. Involved in the final reduction of the elongation cycle of fatty acid synthesis (FAS II). Catalyzes the reduction of a carbon-carbon double bond in an enoyl moiety that is covalently linked to an acyl carrier protein (ACP). The protein is Enoyl-[acyl-carrier-protein] reductase [NADH] of Pseudomonas putida (strain ATCC 47054 / DSM 6125 / CFBP 8728 / NCIMB 11950 / KT2440).